The chain runs to 341 residues: Aromatic amino acid aminotransferase (341 aa).

The residue at position 213 (Lys213) is an N6-(pyridoxal phosphate)lysine.

Belongs to the class-II pyridoxal-phosphate-dependent aminotransferase family. Homodimer. The cofactor is pyridoxal 5'-phosphate.

It catalyses the reaction an aromatic L-alpha-amino acid + 2-oxoglutarate = an aromatic oxo-acid + L-glutamate. In terms of biological role, aminotransferase that catalyzes the conversion of aromatic amino acids and 2-oxoglutarate into corresponding aromatic oxo acids and L-glutamate. This chain is Aromatic amino acid aminotransferase, found in Corynebacterium glutamicum (strain R).